A 288-amino-acid polypeptide reads, in one-letter code: 4-diphosphocytidyl-2-C-methyl-D-erythritol kinase (288 aa).

Lysine 8 is a catalytic residue. Position 90-100 (90-100) interacts with ATP; that stretch reads PVGAGLAGGSS. Residue aspartate 132 is part of the active site.

This sequence belongs to the GHMP kinase family. IspE subfamily.

The enzyme catalyses 4-CDP-2-C-methyl-D-erythritol + ATP = 4-CDP-2-C-methyl-D-erythritol 2-phosphate + ADP + H(+). It functions in the pathway isoprenoid biosynthesis; isopentenyl diphosphate biosynthesis via DXP pathway; isopentenyl diphosphate from 1-deoxy-D-xylulose 5-phosphate: step 3/6. Catalyzes the phosphorylation of the position 2 hydroxy group of 4-diphosphocytidyl-2C-methyl-D-erythritol. This chain is 4-diphosphocytidyl-2-C-methyl-D-erythritol kinase, found in Chlamydia trachomatis serovar A (strain ATCC VR-571B / DSM 19440 / HAR-13).